Consider the following 144-residue polypeptide: uncharacterized protein (144 aa).

Residues 1-24 are disordered; the sequence is MGKVIQFPFGEEPEKKEEKELKTE. Residues 12-24 show a composition bias toward basic and acidic residues; that stretch reads EPEKKEEKELKTE.

This is an uncharacterized protein from Aquifex aeolicus (strain VF5).